A 719-amino-acid chain; its full sequence is Endonuclease MutS2 (719 aa).

An ATP-binding site is contributed by 273–280; it reads GPNTGGKT. Positions 644-719 constitute a Smr domain; the sequence is LDLRGYRYED…GFGVTVATLK (76 aa).

This sequence belongs to the DNA mismatch repair MutS family. MutS2 subfamily. Homodimer. Binds to stalled ribosomes, contacting rRNA.

In terms of biological role, endonuclease that is involved in the suppression of homologous recombination and thus may have a key role in the control of bacterial genetic diversity. Its function is as follows. Acts as a ribosome collision sensor, splitting the ribosome into its 2 subunits. Detects stalled/collided 70S ribosomes which it binds and splits by an ATP-hydrolysis driven conformational change. Acts upstream of the ribosome quality control system (RQC), a ribosome-associated complex that mediates the extraction of incompletely synthesized nascent chains from stalled ribosomes and their subsequent degradation. Probably generates substrates for RQC. The chain is Endonuclease MutS2 from Staphylococcus aureus.